Here is a 50-residue protein sequence, read N- to C-terminus: Large ribosomal subunit protein bL32c (50 aa).

The protein belongs to the bacterial ribosomal protein bL32 family.

The protein localises to the plastid. The protein resides in the chloroplast. This Lotus japonicus (Lotus corniculatus var. japonicus) protein is Large ribosomal subunit protein bL32c.